The following is a 477-amino-acid chain: Bifunctional protein HldE (477 aa).

Residues 1-318 form a ribokinase region; sequence MKVTLPEFER…ENAVRGRAET (318 aa). 195-198 contacts ATP; that stretch reads NLSE. Residue D264 is part of the active site. The segment at 344 to 477 is cytidylyltransferase; sequence MTNGVFDILH…IKKIQKDSDK (134 aa).

The protein in the N-terminal section; belongs to the carbohydrate kinase PfkB family. In the C-terminal section; belongs to the cytidylyltransferase family. In terms of assembly, homodimer.

It catalyses the reaction D-glycero-beta-D-manno-heptose 7-phosphate + ATP = D-glycero-beta-D-manno-heptose 1,7-bisphosphate + ADP + H(+). The enzyme catalyses D-glycero-beta-D-manno-heptose 1-phosphate + ATP + H(+) = ADP-D-glycero-beta-D-manno-heptose + diphosphate. It functions in the pathway nucleotide-sugar biosynthesis; ADP-L-glycero-beta-D-manno-heptose biosynthesis; ADP-L-glycero-beta-D-manno-heptose from D-glycero-beta-D-manno-heptose 7-phosphate: step 1/4. The protein operates within nucleotide-sugar biosynthesis; ADP-L-glycero-beta-D-manno-heptose biosynthesis; ADP-L-glycero-beta-D-manno-heptose from D-glycero-beta-D-manno-heptose 7-phosphate: step 3/4. In terms of biological role, catalyzes the phosphorylation of D-glycero-D-manno-heptose 7-phosphate at the C-1 position to selectively form D-glycero-beta-D-manno-heptose-1,7-bisphosphate. Its function is as follows. Catalyzes the ADP transfer from ATP to D-glycero-beta-D-manno-heptose 1-phosphate, yielding ADP-D-glycero-beta-D-manno-heptose. The chain is Bifunctional protein HldE from Klebsiella pneumoniae (strain 342).